The chain runs to 449 residues: Tubulin alpha-2 chain (449 aa).

Q11 is a GTP binding site. Position 40 is an N6-acetyllysine (K40). Positions 140, 144, 145, 179, 206, and 228 each coordinate GTP. The active site involves E254.

It belongs to the tubulin family. Dimer of alpha and beta chains. A typical microtubule is a hollow water-filled tube with an outer diameter of 25 nm and an inner diameter of 15 nM. Alpha-beta heterodimers associate head-to-tail to form protofilaments running lengthwise along the microtubule wall with the beta-tubulin subunit facing the microtubule plus end conferring a structural polarity. Microtubules usually have 13 protofilaments but different protofilament numbers can be found in some organisms and specialized cells. Acetylation of alpha chains at Lys-40 stabilizes microtubules and affects affinity and processivity of microtubule motors. This modification has a role in multiple cellular functions, ranging from cell motility, cell cycle progression or cell differentiation to intracellular trafficking and signaling.

Its subcellular location is the cytoplasm. The protein localises to the cytoskeleton. The catalysed reaction is GTP + H2O = GDP + phosphate + H(+). Tubulin is the major constituent of microtubules, a cylinder consisting of laterally associated linear protofilaments composed of alpha- and beta-tubulin heterodimers. Microtubules grow by the addition of GTP-tubulin dimers to the microtubule end, where a stabilizing cap forms. Below the cap, tubulin dimers are in GDP-bound state, owing to GTPase activity of alpha-tubulin. The sequence is that of Tubulin alpha-2 chain from Stylonychia lemnae (Ciliate).